The primary structure comprises 330 residues: MTNKIVFPEPKQQVDFAFSLKRFRGIYLQNALLETVRDMDIVALDTQLAEYVNKADLATLATYGLRAELLFPVPVLLETNPFLLGYYRLLMGYSQKEFYGKDKGFNAGCFKSMEVKGNIGKVAKPKISELCHAFCSVASSLLQGVGPLRISRELLDDLTLLTVGPQLRGGANNQRGADGIVLVFEIIKEIVSHAVAEVRENAIEVNSATGRNVLIEFAPDPDIIIREEMSLDNYRNVVAIEVKSGTDVSNIHNRIGEAEKSHQKARGHGYTECWTVVNVSRLDMDKARKESPSTNRFYSITDLSLREGEQYEDFRRRVLSLTAISAAPTP.

This sequence belongs to the XcyI type II restriction endonuclease family. The cofactor is Mg(2+).

It carries out the reaction Endonucleolytic cleavage of DNA to give specific double-stranded fragments with terminal 5'-phosphates.. In terms of biological role, an E and P subtype restriction enzyme that recognizes the double-stranded sequence 5'-CCCGGG-3' and cleaves after C-1. The sequence is that of Type II restriction enzyme Cfr9I (cfr9IR) from Citrobacter freundii.